The following is a 123-amino-acid chain: Large ribosomal subunit protein eL8 (123 aa).

The protein belongs to the eukaryotic ribosomal protein eL8 family. May be present in up to 3 copies per 70S ribosome. Part of the 50S ribosomal subunit, where it binds 23S rRNA at its canonical site near the L1 stalk, as well as a possible second 50S binding site near helix 25 and a possible third site on the beak of the 30S subunit. Component of box C/D small ribonucleoprotein (sRNP) particles that contain rpl7ae, FlpA and nop5, plus a guide RNA. These sRNP particles form homodimers, giving rise to an asymmetric holoenzyme. Probably part of the RNase P complex.

It is found in the cytoplasm. Its function is as follows. Multifunctional RNA-binding protein that recognizes the K-turn motif in ribosomal RNA, the RNA component of RNase P, box H/ACA, box C/D and box C'/D' sRNAs. Component of the 70S ribosome. Component of a box C/D small ribonucleoprotein (sRNP) particle that is involved in pre-rRNA and tRNA processing. Utilizes the methyl donor S-adenosyl-L-methionine to catalyze the site-specific 2'-hydroxyl methylation of ribose moieties in rRNA and tRNA. Site specificity is provided by a guide RNA that base pairs with the substrate. Methylation occurs at a characteristic distance from the sequence involved in base pairing with the guide RNA. This Pyrococcus furiosus (strain ATCC 43587 / DSM 3638 / JCM 8422 / Vc1) protein is Large ribosomal subunit protein eL8.